The primary structure comprises 258 residues: Putative phosphoenolpyruvate synthase regulatory protein (258 aa).

Position 146-153 (146-153) interacts with ADP; sequence GVSRVGKT.

This sequence belongs to the pyruvate, phosphate/water dikinase regulatory protein family. PSRP subfamily.

The catalysed reaction is [pyruvate, water dikinase] + ADP = [pyruvate, water dikinase]-phosphate + AMP + H(+). The enzyme catalyses [pyruvate, water dikinase]-phosphate + phosphate + H(+) = [pyruvate, water dikinase] + diphosphate. Bifunctional serine/threonine kinase and phosphorylase involved in the regulation of the phosphoenolpyruvate synthase (PEPS) by catalyzing its phosphorylation/dephosphorylation. The polypeptide is Putative phosphoenolpyruvate synthase regulatory protein (Thiobacillus denitrificans (strain ATCC 25259 / T1)).